Here is a 565-residue protein sequence, read N- to C-terminus: Periplasmic trehalase (565 aa).

Residues 1 to 30 (MKSPAPSRPQKMALIPACIFLCFAALSVQA) form the signal peptide. Residues Arg152, 159 to 160 (WD), Asn196, 205 to 207 (RSQ), 277 to 279 (RPE), and Gly310 each bind substrate. Residues Asp312 and Glu496 each act as proton donor/acceptor in the active site. Glu511 provides a ligand contact to substrate. The tract at residues 538–565 (PCDNVPATRPTVKSATTQPSTKEAQPTP) is disordered. The segment covering 548 to 565 (TVKSATTQPSTKEAQPTP) has biased composition (polar residues).

Belongs to the glycosyl hydrolase 37 family. In terms of assembly, monomer.

The protein localises to the periplasm. It catalyses the reaction alpha,alpha-trehalose + H2O = alpha-D-glucose + beta-D-glucose. Provides the cells with the ability to utilize trehalose at high osmolarity by splitting it into glucose molecules that can subsequently be taken up by the phosphotransferase-mediated uptake system. The chain is Periplasmic trehalase from Escherichia coli O139:H28 (strain E24377A / ETEC).